The following is a 233-amino-acid chain: U2 small nuclear ribonucleoprotein A' (233 aa).

LRR repeat units follow at residues 20-40, 42-63, 65-86, and 89-110; these read KLTLLLRDLQITELENLAITQ, KYQVIDLSNNDLISLGNIPKRF, NLQCLLLSNNNISYIDDESFPS, and HITSITLFNNNIYQFQKSFKDK. The 39-residue stretch at 122–160 folds into the LRRCT domain; sequence NPITEMENYRYFIIWLIPSLKVLDFKKVKQAERKTSEDM.

This sequence belongs to the U2 small nuclear ribonucleoprotein A family. As to quaternary structure, associated with the spliceosome.

It localises to the nucleus. Its function is as follows. Involved in pre-mRNA splicing. The chain is U2 small nuclear ribonucleoprotein A' (LEA1) from Candida albicans (strain SC5314 / ATCC MYA-2876) (Yeast).